The primary structure comprises 156 residues: 6,7-dimethyl-8-ribityllumazine synthase (156 aa).

Residues W33, 64–66, and 86–88 each bind 5-amino-6-(D-ribitylamino)uracil; these read SVE and VIL. (2S)-2-hydroxy-3-oxobutyl phosphate is bound at residue 91-92; that stretch reads ET. H94 functions as the Proton donor in the catalytic mechanism. Residue I119 participates in 5-amino-6-(D-ribitylamino)uracil binding. Position 133 (R133) interacts with (2S)-2-hydroxy-3-oxobutyl phosphate.

It belongs to the DMRL synthase family.

The enzyme catalyses (2S)-2-hydroxy-3-oxobutyl phosphate + 5-amino-6-(D-ribitylamino)uracil = 6,7-dimethyl-8-(1-D-ribityl)lumazine + phosphate + 2 H2O + H(+). It participates in cofactor biosynthesis; riboflavin biosynthesis; riboflavin from 2-hydroxy-3-oxobutyl phosphate and 5-amino-6-(D-ribitylamino)uracil: step 1/2. Catalyzes the formation of 6,7-dimethyl-8-ribityllumazine by condensation of 5-amino-6-(D-ribitylamino)uracil with 3,4-dihydroxy-2-butanone 4-phosphate. This is the penultimate step in the biosynthesis of riboflavin. The sequence is that of 6,7-dimethyl-8-ribityllumazine synthase from Tropheryma whipplei (strain TW08/27) (Whipple's bacillus).